The following is a 276-amino-acid chain: 4-deoxy-L-threo-5-hexosulose-uronate ketol-isomerase 2 (276 aa).

Residues H194, H196, E201, and H243 each contribute to the Zn(2+) site.

It belongs to the KduI family. The cofactor is Zn(2+).

It carries out the reaction 5-dehydro-4-deoxy-D-glucuronate = 3-deoxy-D-glycero-2,5-hexodiulosonate. It functions in the pathway glycan metabolism; pectin degradation; 2-dehydro-3-deoxy-D-gluconate from pectin: step 4/5. Functionally, catalyzes the isomerization of 5-dehydro-4-deoxy-D-glucuronate to 3-deoxy-D-glycero-2,5-hexodiulosonate. This Enterococcus faecalis (strain ATCC 700802 / V583) protein is 4-deoxy-L-threo-5-hexosulose-uronate ketol-isomerase 2 (kduI2).